Reading from the N-terminus, the 127-residue chain is MORF4 family-associated protein 1 (127 aa).

The stretch at 92–126 (RAAKRCEKAEEKAKEIAKMAEMLVELVRRIEKSES) forms a coiled coil.

It belongs to the MORF4 family-associated protein family. Found in a complex composed of MORF4L1, MRFAP1 and RB1. Interacts via its N-terminus with MORF4L1. Interacts with CSTB and MORF4L2.

The protein localises to the nucleus. Its subcellular location is the cytoplasm. The protein resides in the perinuclear region. This chain is MORF4 family-associated protein 1, found in Homo sapiens (Human).